The following is a 177-amino-acid chain: MESCPSVKNILVLDSEGKRVAVKYYSDDWPSLSSKQAFEKSVFAKTQKTSARTEAEIVMFDSYFVVYKFIQDLHFFVTGGDEENELILASVLQGFSEAIDYLLRNKVHRRAALENLDLIFLCLDEVVDGGIVLETDAKAILEKVSGHGLEGSGSLTEQKLSSALATAREHFARSIFS.

This sequence belongs to the adaptor complexes small subunit family. In terms of assembly, oligomeric complex that consists of at least the alpha, beta, beta', gamma, delta, epsilon and zeta subunits.

It is found in the cytoplasm. Its subcellular location is the golgi apparatus membrane. The protein resides in the cytoplasmic vesicle. It localises to the COPI-coated vesicle membrane. Functionally, the coatomer is a cytosolic protein complex that binds to dilysine motifs and reversibly associates with Golgi non-clathrin-coated vesicles, which further mediate biosynthetic protein transport from the ER, via the Golgi up to the trans Golgi network. Coatomer complex is required for budding from Golgi membranes, and is essential for the retrograde Golgi-to-ER transport of dilysine-tagged proteins. The zeta subunit may be involved in regulating the coat assembly and, hence, the rate of biosynthetic protein transport due to its association-dissociation properties with the coatomer complex. The polypeptide is Coatomer subunit zeta-3 (Oryza sativa subsp. japonica (Rice)).